The chain runs to 579 residues: Cyclin-T1-5 (579 aa).

Disordered regions lie at residues 1 to 27 (MAGVLAGECSYSESGVSSHSRNSHEKQ) and 271 to 419 (RVPA…GDAL). The segment covering 11–20 (YSESGVSSHS) has biased composition (polar residues). A compositionally biased stretch (low complexity) spans 274–283 (ASQGSEVESS). A compositionally biased stretch (polar residues) spans 306-334 (SRQTSSVRSTHEQSNSDNHGGSSKGVLNQ). Basic and acidic residues-rich tracts occupy residues 349–380 (DNKEEIERETKESSLHLESHPAHKDNVREAPH) and 389–414 (PGKDNSEREGGELQDDGAVHKSRNVD). A Phosphoserine modification is found at Ser-423. Basic and acidic residues-rich tracts occupy residues 474-512 (DEKTKERKVQSRPKAENSDLMGTEHGEILDVKGEVKNTE), 538-556 (KQSEGKRRHNSENGEESHK), and 563-579 (HHGDREHRRHSQENNHS). Positions 474-579 (DEKTKERKVQ…RRHSQENNHS (106 aa)) are disordered.

The protein belongs to the cyclin family. Cyclin T subfamily.

The chain is Cyclin-T1-5 (CYCT1-5) from Arabidopsis thaliana (Mouse-ear cress).